The following is a 493-amino-acid chain: Probable NADPH:adrenodoxin oxidoreductase, mitochondrial (493 aa).

4 residues coordinate FAD: serine 26, glutamate 48, leucine 56, and isoleucine 100. NADP(+) contacts are provided by residues 177-180 (NGNV), 223-224 (RR), and glutamate 235. Residues tryptophan 407 and 414–416 (GVI) contribute to the FAD site. Glycine 414 is an NADP(+) binding site.

This sequence belongs to the ferredoxin--NADP reductase type 1 family. Requires FAD as cofactor.

It is found in the mitochondrion inner membrane. The catalysed reaction is 2 reduced [adrenodoxin] + NADP(+) + H(+) = 2 oxidized [adrenodoxin] + NADPH. Functionally, adrenodoxin reductase transfers electrons from NADPH to adrenodoxin, which is involved in heme A biosynthesis and in iron-sulfur cluster assembly. Involved in the electron transfer to heme A synthase COX15, a heme protein that catalyzes the conversion of heme O to heme A. Required for the de novo synthesis of Fe-S clusters on iron sulfur cluster assembly protein ISU1. Involved in electron delivery for Fe-S cluster synthesis. Essential for coenzyme Q biosynthesis. May be involved in the electron transfer required for the hydroxylation reaction performed by COQ6. May play a role in cellular and mitochondrial iron homeostasis. This chain is Probable NADPH:adrenodoxin oxidoreductase, mitochondrial, found in Saccharomyces cerevisiae (strain ATCC 204508 / S288c) (Baker's yeast).